Consider the following 579-residue polypeptide: MFS-type transporter olcL (579 aa).

Positions 1 to 24 are enriched in polar residues; it reads MANIGGSNAVSSAQGSQISDSPTT. The tract at residues 1-75 is disordered; the sequence is MANIGGSNAV…GFGEDGCQSD (75 aa). The span at 25 to 35 shows a compositional bias: basic and acidic residues; it reads VDDRLDEHKET. Positions 36-54 are enriched in polar residues; the sequence is STQSIDHSENITQSPTSLQ. The N-linked (GlcNAc...) asparagine glycan is linked to Asn45. The next 9 helical transmembrane spans lie at 85–105, 121–141, 159–179, 183–203, 214–234, 241–261, 282–302, 310–330, and 355–375; these read LAAI…DNTI, GDVG…TLVF, AVFE…GLII, IAGL…SQSV, LVGG…GAFT, WCFY…LLFF, LIGL…LQWG, SGRI…FIMV, and LFNF…PVWF. Asn380 carries an N-linked (GlcNAc...) asparagine glycan. The next 5 helical transmembrane spans lie at 388–408, 411–431, 439–459, 479–501, and 553–573; these read LMNL…GYGV, IGYY…GAGL, FGPS…GLGL, IAIV…QNVF, and FYVG…IQWI.

Belongs to the major facilitator superfamily. TCR/Tet family.

The protein resides in the peroxisome membrane. Functionally, MFS-type transporter; part of the gene cluster that mediates the biosynthesis of 15-deoxyoxalicine B. The first step of the pathway is the synthesis of nicotinyl-CoA from nicotinic acid by the nicotinic acid-CoA ligase olcI. Nicotinyl-CoA is then a substrate of polyketide synthase olcA to produce 4-hydroxy-6-(3-pyridinyl)-2H-pyran-2-one (HPPO) which is further prenylated by the polyprenyl transferase olcH to yield geranylgeranyl-HPPO. Geranylgeranyl pyrophosphate is provided by the cluster-specific geranylgeranyl pyrophosphate synthase olcC. The FAD-dependent monooxygenase olcE catalyzes the epoxidation of geranylgeranyl-HPPO and the terpene cyclase olcD catalyzes the cyclization of the terpenoid component, resulting in the formation of the tricyclic terpene moiety seen in predecaturin E. The cytochrome P450 monooxygenase then catalyzes the allylic oxidation of predecaturin E, which is followed by spirocylization with concomitant loss of one molecule of water to form decaturin E. Decaturin E is the substrate of the cytochrome P450 monooxygenase olcJ which hydroxylates it at the C-29 position to form decaturin F. The short-chain dehydrogenase/reductase olcF may catalyze the oxidation of decaturin F to generate the 29-hydroxyl-27-one intermediate, and subsequent hemiacetal formation probably leads to the formation of decaturin C. The dioxygenase olcK may be a peroxisomal enzyme that catalyzes the hydroxylation of decaturin C into decaturin A once decaturin C is shuttled into the peroxisome by the MFS transporter olcL. Finally the cytochrome P450 monooxygenase olcB catalyzes the oxidative rearrangement to yield 15-deoxyoxalicine B. In the absence of olcJ, decaturin E may be shunted to a pathway in which it is oxidized to a ketone, possibly by olcF, to form decaturin D, which undergoes further allylic oxidation to yield decaturin G. Moreover, in the absence of oclK or oclL, oclB can convert decaturin C into 15-deoxyoxalicine A. The chain is MFS-type transporter olcL from Penicillium canescens.